Consider the following 78-residue polypeptide: Acyl carrier protein (78 aa).

Residues 2-77 (SDIAERVKKI…DAIKFLEKNS (76 aa)) form the Carrier domain. An O-(pantetheine 4'-phosphoryl)serine modification is found at Ser37.

Belongs to the acyl carrier protein (ACP) family. 4'-phosphopantetheine is transferred from CoA to a specific serine of apo-ACP by AcpS. This modification is essential for activity because fatty acids are bound in thioester linkage to the sulfhydryl of the prosthetic group.

It localises to the cytoplasm. The protein operates within lipid metabolism; fatty acid biosynthesis. In terms of biological role, carrier of the growing fatty acid chain in fatty acid biosynthesis. In Methylorubrum extorquens (strain CM4 / NCIMB 13688) (Methylobacterium extorquens), this protein is Acyl carrier protein.